A 798-amino-acid chain; its full sequence is Integrin beta-1 (798 aa).

An N-terminal signal peptide occupies residues 1 to 20 (MNLQLIFWIGLISSVCCVFG). Residues 21 to 728 (QADENRCLKA…ETPECPTGPD (708 aa)) are Extracellular-facing. Residues 26 to 76 (RCLKANAKSCGECIQAGPNCGWCTNSTFLQEGMPTSARCDDLEALKKKGCH) form the PSI domain. 28 disulfides stabilise this stretch: Cys27/Cys45, Cys35/Cys464, Cys38/Cys64, Cys48/Cys75, Cys207/Cys213, Cys261/Cys301, Cys401/Cys415, Cys435/Cys462, Cys466/Cys486, Cys477/Cys489, Cys491/Cys500, Cys502/Cys533, Cys516/Cys531, Cys525/Cys536, Cys538/Cys553, Cys555/Cys576, Cys560/Cys574, Cys568/Cys579, Cys581/Cys590, Cys592/Cys615, Cys599/Cys613, Cys607/Cys618, Cys620/Cys630, Cys633/Cys636, Cys640/Cys691, Cys646/Cys665, Cys649/Cys661, and Cys699/Cys723. N-linked (GlcNAc...) asparagine glycosylation occurs at Asn50. A compositionally biased stretch (basic and acidic residues) spans 75 to 91 (CHPNDIENPRGSKDIKK). Positions 75 to 105 (CHPNDIENPRGSKDIKKNKNVTNRSKGTAEK) are disordered. Residues Asn94 and Asn97 are each glycosylated (N-linked (GlcNAc...) asparagine). Residues 140 to 378 (DYPIDLYYLM…QLIIDAYNSL (239 aa)) form the VWFA domain. Positions 152 and 154 each coordinate Mg(2+). Ca(2+) is bound by residues Ser154, Asp157, Asp158, and Glu189. Positions 207 to 213 (CTNEQNC) are CX3CL1-binding. N-linked (GlcNAc...) asparagine glycosylation is present at Asn212. Positions 244, 246, 248, and 249 each coordinate Ca(2+). Residue Glu249 coordinates Mg(2+). Asn269 carries N-linked (GlcNAc...) asparagine glycosylation. The tract at residues 295 to 314 (LPNDGQCHLENDVYTMSHYY) is CX3CL1-binding. Residue Ala362 coordinates Ca(2+). N-linked (GlcNAc...) asparagine glycans are attached at residues Asn363, Asn406, and Asn417. Residues 383–465 (ILENSKLPEG…IILQFICECE (83 aa)) are interaction with TMEM182. I-EGF domains are found at residues 466 to 501 (CQGEGIPGSPKCHDGNGTFECGACRCNEGRVGRHCE), 502 to 554 (CSTD…KFCE), 555 to 591 (CDNFNCDRSNGLICGGNGVCKCRVCECNPNYTGSACD), and 592 to 631 (CSLDTTSCMAVNGQICNGRGVCECGACKCTDPKFQGPTCE). Asn481 carries N-linked (GlcNAc...) asparagine glycosylation. A glycan (N-linked (GlcNAc...) asparagine) is linked at Asn520. An N-linked (GlcNAc...) asparagine glycan is attached at Asn584. Asn669 carries an N-linked (GlcNAc...) asparagine glycan. Residues 729-749 (IIPIVAGVVAGIVLIGLALLL) traverse the membrane as a helical segment. Residues 750 to 798 (IWKLLMIIHDRREFAKFEKEKMNAKWDTGENPIYKSAVTTVVNPKYEGK) are Cytoplasmic-facing. A signal for sorting from recycling endosomes; interaction with ACAP1 region spans residues 762–767 (EFAKFE). Thr777 is subject to Phosphothreonine. The residue at position 783 (Tyr783) is a Phosphotyrosine. Ser785 is subject to Phosphoserine. Residues 785 to 792 (SAVTTVVN) are interaction with ITGB1BP1. A Phosphothreonine modification is found at Thr789. Lys794 bears the N6-acetyllysine; alternate mark. Lys794 participates in a covalent cross-link: Glycyl lysine isopeptide (Lys-Gly) (interchain with G-Cter in SUMO1); alternate.

Belongs to the integrin beta chain family. In terms of assembly, interacts with seprase FAP (seprase); the interaction occurs at the cell surface of invadopodia membrane in a collagen-dependent manner. Heterodimer of an alpha and a beta subunit. Beta-1 associates with either alpha-1, alpha-2, alpha-3, alpha-4, alpha-5, alpha-6, alpha-7, alpha-8, alpha-9, alpha-10, alpha-11 or alpha-V. ITGA6:ITGB1 is found in a complex with CD9; interaction takes place in oocytes and is involved in sperm-egg fusion. Binds LGALS3BP and NMRK2, when associated with alpha-7, but not with alpha-5. Interacts with FLNB, FLNC and RANBP9. Interacts with KRT1 in the presence of RACK1 and SRC. Interacts with JAML; integrin alpha-4/beta-1 may regulate leukocyte to endothelial cells adhesion by controlling JAML homodimerization. Interacts with RAB21. Interacts (via the cytoplasmic region) with RAB25 (via the hypervariable C-terminal region). Interacts with MYO10. Interacts with ITGB1BP1 (via C-terminal region); the interaction is a prerequisite for focal adhesion disassembly. Interacts with TLN1; the interaction is prevented by competitive binding of ITGB1BP1. Interacts with ACAP1; required for ITGB1 recycling. Interacts with ASAP3. Interacts with FERMT2; the interaction is inhibited in presence of ITGB1BP1. Interacts with DAB2. Interacts with FGR and HCK. Interacts with EMP2; the interaction may be direct or indirect and ITGB1 has a heterodimer form. ITGA5:ITGB1 interacts with CCN3. ITGA4:ITGB1 is found in a ternary complex with CX3CR1 and CX3CL1. ITGA5:ITGB1 interacts with FBN1. ITGA5:ITGB1 interacts with IL1B. Interacts with MDK. ITGA4:ITGB1 interacts with MDK; this interaction mediates MDK-induced osteoblast cells migration through PXN phosphorylation. ITGA6:ITGB1 interacts with MDK; this interaction mediates MDK-induced neurite-outgrowth. ITGA5:ITGB1 interacts with ACE2. Interacts with TMEM182 and LAMB1. Interacts with tensin TNS3; TNS3 also interacts with PEAK1, thus acting as an adapter molecule to bridge the association of PEAK1 with ITGB1. Interacts with tensin TNS4; the interaction displaces tensin TNS3 from the ITGB1 cytoplasmic tail and promotes ITGB1 stability. Integrin ITGA9:ITGB1 interacts with SPP1/OPN (via N-terminus). Integrin ITGA9:ITGB1 interacts with TNC/TNFN3 (via the 3rd Fibronectin type-III domain). Integrins ITGA4:ITGB1 and ITGA9:ITGB1 interact with SVEP1 (via Sushi domain 21); thereby inhibit Ca(2+) intracellular signaling and as a result repress vasocontraction. ITGA4:ITGB1 and ITGA5:ITGB1 interacts with SELP. Interacts with CD248. ITGA5:ITGB1 interacts with IGFBP1. ITGA4:ITGB1 interacts with BCAM. Interacts with ADGRG6. Interacts with the C-terminal region of FLNC. Interacts with filamin FLNA isoform 3/VAR-1. As to quaternary structure, interacts with ACE2. Interacts with alpha-7B in cardiomyocytes of adult heart and alpha-7A and alpha-7B in adult skeletal muscle. Interacts with filamin FLNA isoform 3/VAR-1.

It localises to the cell membrane. The protein localises to the cell projection. Its subcellular location is the invadopodium membrane. It is found in the ruffle membrane. The protein resides in the recycling endosome. It localises to the melanosome. The protein localises to the lamellipodium. Its subcellular location is the ruffle. It is found in the cell junction. The protein resides in the focal adhesion. It localises to the sarcolemma. Functionally, integrins alpha-1/beta-1, alpha-2/beta-1, alpha-10/beta-1 and alpha-11/beta-1 are receptors for collagen. Integrins alpha-1/beta-1 and alpha-2/beta-2 recognize the proline-hydroxylated sequence G-F-P-G-E-R in collagen. Integrins alpha-2/beta-1, alpha-3/beta-1, alpha-4/beta-1, alpha-5/beta-1, alpha-8/beta-1, alpha-10/beta-1, alpha-11/beta-1 and alpha-V/beta-1 are receptors for fibronectin. Alpha-4/beta-1 recognizes one or more domains within the alternatively spliced CS-1 and CS-5 regions of fibronectin. Integrin alpha-5/beta-1 is a receptor for fibrinogen. Integrin alpha-1/beta-1, alpha-2/beta-1, alpha-6/beta-1 and alpha-7/beta-1 are receptors for lamimin. Integrin alpha-6/beta-1 (ITGA6:ITGB1) is present in oocytes and is involved in sperm-egg fusion. Integrin alpha-4/beta-1 is a receptor for VCAM1 and recognizes the sequence Q-I-D-S in VCAM1. Integrin alpha-9/beta-1 is a receptor for VCAM1, cytotactin and osteopontin. It recognizes the sequence A-E-I-D-G-I-E-L in cytotactin. Integrin alpha-3/beta-1 is a receptor for epiligrin, thrombospondin and CSPG4. Integrin alpha-3/beta-1 provides a docking site for FAP (seprase) at invadopodia plasma membranes in a collagen-dependent manner and hence may participate in the adhesion, formation of invadopodia and matrix degradation processes, promoting cell invasion. Alpha-3/beta-1 may mediate with LGALS3 the stimulation by CSPG4 of endothelial cells migration. Integrin alpha-V/beta-1 is a receptor for vitronectin. Beta-1 integrins recognize the sequence R-G-D in a wide array of ligands. When associated with alpha-7/beta-1 integrin, regulates cell adhesion and laminin matrix deposition. Involved in promoting endothelial cell motility and angiogenesis. Involved in osteoblast compaction through the fibronectin fibrillogenesis cell-mediated matrix assembly process and the formation of mineralized bone nodules. May be involved in up-regulation of the activity of kinases such as PKC via binding to KRT1. Together with KRT1 and RACK1, serves as a platform for SRC activation or inactivation. Plays a mechanistic adhesive role during telophase, required for the successful completion of cytokinesis. ITGA4:ITGB1 binds to fractalkine (CX3CL1) and may act as its coreceptor in CX3CR1-dependent fractalkine signaling. ITGA4:ITGB1 and ITGA5:ITGB1 bind to PLA2G2A via a site (site 2) which is distinct from the classical ligand-binding site (site 1) and this induces integrin conformational changes and enhanced ligand binding to site 1. ITGA5:ITGB1 acts as a receptor for fibrillin-1 (FBN1) and mediates R-G-D-dependent cell adhesion to FBN1. ITGA5:ITGB1 acts as a receptor for fibronectin FN1 and mediates R-G-D-dependent cell adhesion to FN1. ITGA5:ITGB1 is a receptor for IL1B and binding is essential for IL1B signaling. ITGA5:ITGB3 is a receptor for soluble CD40LG and is required for CD40/CD40LG signaling. Plays an important role in myoblast differentiation and fusion during skeletal myogenesis. ITGA9:ITGB1 may play a crucial role in SVEP1/polydom-mediated myoblast cell adhesion. Integrins ITGA9:ITGB1 and ITGA4:ITGB1 repress PRKCA-mediated L-type voltage-gated channel Ca(2+) influx and ROCK-mediated calcium sensitivity in vascular smooth muscle cells via their interaction with SVEP1, thereby inhibit vasocontraction. This is Integrin beta-1 (ITGB1) from Bos taurus (Bovine).